The primary structure comprises 244 residues: MANITMKALLEAGVHFGHQTRRWNPKMAKFIFGMRNKIHIIDLQKTLKELKKNYKVVRDFTSTGKDIIFVGTKKQARLPIKEEALRCGAYFVSERWLGGTLTNFETLKKSITRYKEIEDMKETGVFKLLSKKEQSRIEKERIKLEKSLEGLKNMSSLPGLMFVVDSHEETTAILEARKLEIPIVAVCDTNCNPDLVDYPIPGNDDAIRAVKLFCTVIADAVLEGKSIIGKQEDNKVKEAAIEVK.

Belongs to the universal ribosomal protein uS2 family.

The protein is Small ribosomal subunit protein uS2 of Endomicrobium trichonymphae.